We begin with the raw amino-acid sequence, 228 residues long: Urease accessory protein UreF (228 aa).

It belongs to the UreF family. As to quaternary structure, ureD, UreF and UreG form a complex that acts as a GTP-hydrolysis-dependent molecular chaperone, activating the urease apoprotein by helping to assemble the nickel containing metallocenter of UreC. The UreE protein probably delivers the nickel.

The protein resides in the cytoplasm. Its function is as follows. Required for maturation of urease via the functional incorporation of the urease nickel metallocenter. This Lachnoclostridium phytofermentans (strain ATCC 700394 / DSM 18823 / ISDg) (Clostridium phytofermentans) protein is Urease accessory protein UreF.